The primary structure comprises 330 residues: Aspartate--ammonia ligase (330 aa).

The protein belongs to the class-II aminoacyl-tRNA synthetase family. AsnA subfamily.

It is found in the cytoplasm. It carries out the reaction L-aspartate + NH4(+) + ATP = L-asparagine + AMP + diphosphate + H(+). It participates in amino-acid biosynthesis; L-asparagine biosynthesis; L-asparagine from L-aspartate (ammonia route): step 1/1. The polypeptide is Aspartate--ammonia ligase (Salmonella paratyphi A (strain ATCC 9150 / SARB42)).